A 403-amino-acid chain; its full sequence is MIDYTQYPDARGHFGIHGGRFVSETLMAALEDLENLYNRMKNDEQFLAEFDRDLAYYVGRPSPLYYAERWSKKLGGAQIYLKREDLNHTGSHKVNNTIGQALLAKLSGKKRIIAETGAGQHGVATATIAARLGLECVVFMGAEDVKRQAMNVYRMRLLGATVIPVQSGSKTLKDAMNEAMRDWVTNVDSTYYVIGTVAGPHPYPQLVRDFQSIIGREARRQIQEQAGRLPDALVACVGGGSNAIGLFYPFLNDQDVKMYGVEAAGHGIETGKHSAPLNAGHVGVLHGNRTYLMSDPQGQIIETHSISAGLDYPGVGPEHSFLKDMHRVEYVPIDDNEALQGFRDLTRIEGIIPAIESAHAMAYVTKLAPTMDKDQIIIANVSGRGDKDLMTVARIDGIEMVEM.

Lysine 93 carries the N6-(pyridoxal phosphate)lysine modification.

The protein belongs to the TrpB family. As to quaternary structure, tetramer of two alpha and two beta chains. Requires pyridoxal 5'-phosphate as cofactor.

It catalyses the reaction (1S,2R)-1-C-(indol-3-yl)glycerol 3-phosphate + L-serine = D-glyceraldehyde 3-phosphate + L-tryptophan + H2O. It functions in the pathway amino-acid biosynthesis; L-tryptophan biosynthesis; L-tryptophan from chorismate: step 5/5. The beta subunit is responsible for the synthesis of L-tryptophan from indole and L-serine. The polypeptide is Tryptophan synthase beta chain (Acinetobacter baylyi (strain ATCC 33305 / BD413 / ADP1)).